Here is a 252-residue protein sequence, read N- to C-terminus: Gastrula zinc finger protein XlCGF28.1 (252 aa).

9 consecutive C2H2-type zinc fingers follow at residues 6–28 (FTCN…LRSH), 34–56 (FTCS…FRGH), 62–84 (SACT…IRSH), 90–112 (YTCT…VRSH), 118–140 (FKCT…LRFH), 146–168 (TTCS…FRVH), 174–196 (FTCT…SYLH), 202–224 (YTCT…SYLH), and 230–252 (FTCT…SHTH).

Belongs to the krueppel C2H2-type zinc-finger protein family.

Its subcellular location is the nucleus. Its function is as follows. May be involved in transcriptional regulation. This chain is Gastrula zinc finger protein XlCGF28.1, found in Xenopus laevis (African clawed frog).